Reading from the N-terminus, the 338-residue chain is Ketol-acid reductoisomerase (NADP(+)) (338 aa).

One can recognise a KARI N-terminal Rossmann domain in the interval M1 to T181. NADP(+)-binding positions include Y24 to Q27, R47, S50, S52, and D82 to Q85. The active site involves H107. G133 provides a ligand contact to NADP(+). The KARI C-terminal knotted domain maps to S182 to I327. Mg(2+)-binding residues include D190, E194, E226, and E230. S251 provides a ligand contact to substrate.

Belongs to the ketol-acid reductoisomerase family. Requires Mg(2+) as cofactor.

It carries out the reaction (2R)-2,3-dihydroxy-3-methylbutanoate + NADP(+) = (2S)-2-acetolactate + NADPH + H(+). The enzyme catalyses (2R,3R)-2,3-dihydroxy-3-methylpentanoate + NADP(+) = (S)-2-ethyl-2-hydroxy-3-oxobutanoate + NADPH + H(+). The protein operates within amino-acid biosynthesis; L-isoleucine biosynthesis; L-isoleucine from 2-oxobutanoate: step 2/4. It participates in amino-acid biosynthesis; L-valine biosynthesis; L-valine from pyruvate: step 2/4. Involved in the biosynthesis of branched-chain amino acids (BCAA). Catalyzes an alkyl-migration followed by a ketol-acid reduction of (S)-2-acetolactate (S2AL) to yield (R)-2,3-dihydroxy-isovalerate. In the isomerase reaction, S2AL is rearranged via a Mg-dependent methyl migration to produce 3-hydroxy-3-methyl-2-ketobutyrate (HMKB). In the reductase reaction, this 2-ketoacid undergoes a metal-dependent reduction by NADPH to yield (R)-2,3-dihydroxy-isovalerate. The chain is Ketol-acid reductoisomerase (NADP(+)) from Magnetococcus marinus (strain ATCC BAA-1437 / JCM 17883 / MC-1).